Reading from the N-terminus, the 242-residue chain is uncharacterized protein (242 aa).

Positions 2-62 (EKAYKLLSVQ…VEKPSVIFED (61 aa)) constitute an S4 RNA-binding domain. The active site involves D93.

The protein belongs to the pseudouridine synthase RluA family.

The enzyme catalyses a uridine in RNA = a pseudouridine in RNA. This is an uncharacterized protein from Helicobacter pylori (strain J99 / ATCC 700824) (Campylobacter pylori J99).